Reading from the N-terminus, the 213-residue chain is Cytidylate kinase (213 aa).

7-15 (GPAASGKGT) is an ATP binding site.

This sequence belongs to the cytidylate kinase family. Type 1 subfamily.

The protein resides in the cytoplasm. The enzyme catalyses CMP + ATP = CDP + ADP. The catalysed reaction is dCMP + ATP = dCDP + ADP. The sequence is that of Cytidylate kinase from Rhodospirillum rubrum (strain ATCC 11170 / ATH 1.1.1 / DSM 467 / LMG 4362 / NCIMB 8255 / S1).